A 1432-amino-acid chain; its full sequence is ABC transporter asL7 (1432 aa).

Positions 1-20 are enriched in polar residues; that stretch reads MFDTTKLQSSTQDGSTSSVT. Positions 1 to 36 are disordered; the sequence is MFDTTKLQSSTQDGSTSSVTGEPIFGANDPNSELNP. In terms of domain architecture, ABC transporter 1 spans 91–341; it reads LALPGMLIRN…FERLGFECPS (251 aa). Asparagine 265 carries N-linked (GlcNAc...) asparagine glycosylation. 6 helical membrane passes run 450–470, 484–504, 530–550, 559–579, 597–617, and 702–722; these read PTIV…SLFF, VVLF…VMTL, VLMD…VFYF, GNFF…SGIF, MIPA…MVPI, and IGIV…TSEY. The region spanning 786 to 1029 is the ABC transporter 2 domain; sequence FHWRNVCYDI…TLVEYFERKA (244 aa). 822–829 is an ATP binding site; the sequence is GVSGAGKT. Asparagine 1017 carries an N-linked (GlcNAc...) asparagine glycan. The disordered stretch occupies residues 1076–1095; sequence LSRLREHGSQSNSHDSEKSE. Transmembrane regions (helical) follow at residues 1135–1155, 1166–1186, 1215–1235, 1251–1271, 1279–1299, and 1317–1337; these read FALC…SPLS, VFQL…QFII, IPYY…PIGL, LMWL…HFCI, AGAN…GALI, and LSYL…VTCA. An N-linked (GlcNAc...) asparagine glycan is attached at asparagine 1371. Residues 1402–1422 form a helical membrane-spanning segment; it reads FGIIWVYVIFNISAAITLYWV.

This sequence belongs to the ABC transporter superfamily. ABCG family. PDR (TC 3.A.1.205) subfamily.

It localises to the cell membrane. Its function is as follows. ABC transporter; part of the gene cluster that mediates the biosynthesis of xenovulene A, an unusual meroterpenoid that has potent inhibitory effects on the human gamma-aminobutyrate A (GABAA) benzodiazepine receptor. This is ABC transporter asL7 from Sarocladium schorii (Acremonium strictum (strain IMI 501407)).